The chain runs to 153 residues: Probable inactive ribonuclease-like protein 13 (153 aa).

The first 22 residues, 1 to 22, serve as a signal peptide directing secretion; it reads MASDAASLLVLQLVLQPTLVTG.

The protein belongs to the pancreatic ribonuclease family.

The protein resides in the secreted. In terms of biological role, does not exhibit any ribonuclease activity. The polypeptide is Probable inactive ribonuclease-like protein 13 (Rnase13) (Rattus norvegicus (Rat)).